We begin with the raw amino-acid sequence, 1358 residues long: DNA-directed RNA polymerase subunit beta (1358 aa).

The protein belongs to the RNA polymerase beta chain family. As to quaternary structure, the RNAP catalytic core consists of 2 alpha, 1 beta, 1 beta' and 1 omega subunit. When a sigma factor is associated with the core the holoenzyme is formed, which can initiate transcription.

It catalyses the reaction RNA(n) + a ribonucleoside 5'-triphosphate = RNA(n+1) + diphosphate. Its function is as follows. DNA-dependent RNA polymerase catalyzes the transcription of DNA into RNA using the four ribonucleoside triphosphates as substrates. This chain is DNA-directed RNA polymerase subunit beta, found in Francisella tularensis subsp. mediasiatica (strain FSC147).